Here is a 374-residue protein sequence, read N- to C-terminus: Pulmonary surfactant-associated protein D (374 aa).

The N-terminal stretch at 1–19 (MLHFLSMLVLLVQPLGDLG) is a signal peptide. 2 positions are modified to S-nitrosocysteine: Cys-34 and Cys-39. The tract at residues 40–221 (SPTENGLPGR…RGIKGESGLP (182 aa)) is disordered. In terms of domain architecture, Collagen-like spans 45–221 (GLPGRDGRDG…RGIKGESGLP (177 aa)). Basic and acidic residues predominate over residues 49–64 (RDGRDGREGPRGEKGD). The residue at position 77 (Pro-77) is a Hydroxyproline. Lys-86 is subject to 5-hydroxylysine. A glycan (N-linked (GlcNAc...) asparagine) is linked at Asn-89. Pro-95 carries the hydroxyproline modification. A 5-hydroxylysine modification is found at Lys-98. Phosphoserine is present on Ser-109. 2 stretches are compositionally biased toward low complexity: residues 137–163 (KGEA…PAGP) and 170–200 (PGEQ…RGPP). Residues Pro-170 and Pro-176 each carry the hydroxyproline modification. Residues 203 to 215 (KGDRGAPGDRGIK) show a composition bias toward basic and acidic residues. A coiled-coil region spans residues 222-253 (DSAALRQQMEALNGKLQRLEAAFSRYKKAALF). Positions 259 to 374 (VGDKIFRAAN…GEQRLVICEF (116 aa)) constitute a C-type lectin domain. Disulfide bonds link Cys-280/Cys-372 and Cys-350/Cys-364.

The protein belongs to the SFTPD family. Oligomeric complex of 4 set of homotrimers. S-nitrosylation at Cys-34 and Cys-39 alters the quaternary structure which results in a pro-inflammatory chemoattractive signaling activity with macrophages.

The protein resides in the secreted. The protein localises to the extracellular space. It localises to the extracellular matrix. It is found in the surface film. Contributes to the lung's defense against inhaled microorganisms, organic antigens and toxins. Interacts with compounds such as bacterial lipopolysaccharides, oligosaccharides and fatty acids and modulates leukocyte action in immune response. May participate in the extracellular reorganization or turnover of pulmonary surfactant. Binds strongly maltose residues and to a lesser extent other alpha-glucosyl moieties. This chain is Pulmonary surfactant-associated protein D (Sftpd), found in Rattus norvegicus (Rat).